The primary structure comprises 355 residues: uncharacterized protein (355 aa).

Cys-2 serves as the catalytic For GATase activity. Residues 2–248 form the Glutamine amidotransferase type-2 domain; sequence CELLGICFNK…NGELMVFKNG (247 aa).

This is an uncharacterized protein from Methanocaldococcus jannaschii (strain ATCC 43067 / DSM 2661 / JAL-1 / JCM 10045 / NBRC 100440) (Methanococcus jannaschii).